Consider the following 310-residue polypeptide: Methionyl-tRNA formyltransferase (310 aa).

110 to 113 (SLLP) serves as a coordination point for (6S)-5,6,7,8-tetrahydrofolate.

Belongs to the Fmt family.

The catalysed reaction is L-methionyl-tRNA(fMet) + (6R)-10-formyltetrahydrofolate = N-formyl-L-methionyl-tRNA(fMet) + (6S)-5,6,7,8-tetrahydrofolate + H(+). In terms of biological role, attaches a formyl group to the free amino group of methionyl-tRNA(fMet). The formyl group appears to play a dual role in the initiator identity of N-formylmethionyl-tRNA by promoting its recognition by IF2 and preventing the misappropriation of this tRNA by the elongation apparatus. This Streptomyces coelicolor (strain ATCC BAA-471 / A3(2) / M145) protein is Methionyl-tRNA formyltransferase.